Consider the following 273-residue polypeptide: Glutamate 5-kinase (273 aa).

Lys15 contacts ATP. Substrate-binding residues include Ser55, Asp142, and Asn158. Residues 178–179 and 220–226 contribute to the ATP site; these read SD and TGGMLSK.

Belongs to the glutamate 5-kinase family.

The protein localises to the cytoplasm. The catalysed reaction is L-glutamate + ATP = L-glutamyl 5-phosphate + ADP. Its pathway is amino-acid biosynthesis; L-proline biosynthesis; L-glutamate 5-semialdehyde from L-glutamate: step 1/2. Its function is as follows. Catalyzes the transfer of a phosphate group to glutamate to form L-glutamate 5-phosphate. This chain is Glutamate 5-kinase, found in Streptococcus pyogenes serotype M2 (strain MGAS10270).